An 843-amino-acid chain; its full sequence is Translation initiation factor IF-2 (843 aa).

The segment at 94–259 (QRSPEEIEAE…AHGFQSPTGP (166 aa)) is disordered. Basic and acidic residues predominate over residues 96–135 (SPEEIEAERKREMDERRAVENAARQKAEEEAKRRAEEDAR). The span at 136 to 177 (NQPAAGQPASAPAQPVAAAEPVREAPAPAAAAPAPASAAPSA) shows a compositional bias: low complexity. Basic and acidic residues-rich tracts occupy residues 178-219 (DARK…EKAP) and 227-236 (TTDEESDSFR). Positions 237-250 (RGGRGKSRLKKRNA) are enriched in basic residues. The tr-type G domain maps to 343–512 (SRAPVVTVMG…LLQAEVLELK (170 aa)). Residues 352–359 (GHVDHGKT) are G1. 352 to 359 (GHVDHGKT) contributes to the GTP binding site. A G2 region spans residues 377–381 (GITQH). Positions 398 to 401 (DTPG) are G3. GTP contacts are provided by residues 398–402 (DTPGH) and 452–455 (NKID). The interval 452-455 (NKID) is G4. Residues 488–490 (SAK) are G5.

Belongs to the TRAFAC class translation factor GTPase superfamily. Classic translation factor GTPase family. IF-2 subfamily.

It localises to the cytoplasm. One of the essential components for the initiation of protein synthesis. Protects formylmethionyl-tRNA from spontaneous hydrolysis and promotes its binding to the 30S ribosomal subunits. Also involved in the hydrolysis of GTP during the formation of the 70S ribosomal complex. The polypeptide is Translation initiation factor IF-2 (Pseudomonas savastanoi pv. phaseolicola (strain 1448A / Race 6) (Pseudomonas syringae pv. phaseolicola (strain 1448A / Race 6))).